The chain runs to 339 residues: Silicatein (339 aa).

Positions 1 to 18 (MAIVYGAILFQIILIACA) are cleaved as a signal peptide. The propeptide occupies 19–122 (EFPPEWHAWK…REYQAPATVS (104 aa)). Residue L123 is modified to N,N-dimethylleucine; alternate. L123 bears the N-methylleucine; alternate mark. S188 carries the post-translational modification Phosphoserine. A Phosphotyrosine modification is found at Y219. Catalysis depends on residues H286 and N306. S335 is modified (phosphoserine).

It belongs to the peptidase C1 family. In terms of assembly, homodimer. Homodimerization occurs as a result of non-covalent interactions and not through disulfide linkages between the two monomers.

Its function is as follows. Polymerizes silica around the axial filament during spicule formation. The protein is Silicatein of Petrosia ficiformis (Common Mediterranean sponge).